The primary structure comprises 68 residues: MKTQFAILLVALVLFQMFAQSDAILGKIWEGIKSLFGKRGLSDLDGLDELFDGEISKADRDFLRELMR.

Positions 1–23 (MKTQFAILLVALVLFQMFAQSDA) are cleaved as a signal peptide. Phe36 is subject to Phenylalanine amide. Residues 40–68 (GLSDLDGLDELFDGEISKADRDFLRELMR) constitute a propeptide that is removed on maturation.

This sequence belongs to the non-disulfide-bridged peptide (NDBP) superfamily. Short antimicrobial peptide (group 4) family. Post-translationally, isCTf is an enzymatic proteolytic cleavage product of IsCT by the proteases present in the venom. As to expression, expressed by the venom gland.

The protein resides in the secreted. It is found in the target cell membrane. Shows weak hemolytic activity and antibacterial activity against both Gram-positive and Gram-negative bacteria probably by forming pores in the cell membrane. IsCT adopts an amphipathic alpha-helical structure. Functionally, shows neither hemolytic, nor antibacterial activities, probably because it cannot adopt amphipathic alpha-helical structure. This chain is Cytotoxic linear peptide IsCT, found in Opisthacanthus madagascariensis (Scorpion).